The chain runs to 338 residues: Cytochrome c biogenesis protein CcsA (338 aa).

The next 8 helical transmembrane spans lie at 15-35 (FLVL…PNIP), 36-56 (GLTG…ATLL), 71-91 (LYES…VAEW), 97-117 (WVGV…ALSL), 142-162 (VMMI…AFLI), 246-266 (IIGL…VWAN), 273-293 (WSWD…AAYL), and 307-327 (AFLA…VNIL).

The protein belongs to the CcmF/CycK/Ccl1/NrfE/CcsA family. As to quaternary structure, may interact with ccs1.

The protein resides in the cellular thylakoid membrane. Functionally, required during biogenesis of c-type cytochromes (cytochrome c6 and cytochrome f) at the step of heme attachment. The polypeptide is Cytochrome c biogenesis protein CcsA (Picosynechococcus sp. (strain ATCC 27264 / PCC 7002 / PR-6) (Agmenellum quadruplicatum)).